Consider the following 517-residue polypeptide: Protein BTN1 (517 aa).

The next 8 helical transmembrane spans lie at 24–44 (LFAA…IILS), 57–77 (GVVA…WPLL), 88–108 (VGFC…SSSL), 112–132 (LLGI…FLQL), 146–166 (LGAW…IWWL), 169–189 (GLGV…FPIT), 371–391 (PAII…TFFF), and 409–429 (SITI…SGYV).

Belongs to the battenin family.

It is found in the vacuole membrane. Its function is as follows. Involved in vacuolar transport and vacuole pH homeostasis. Also required for cytokinesis. The chain is Protein BTN1 (BTN1) from Cryptococcus neoformans var. neoformans serotype D (strain B-3501A) (Filobasidiella neoformans).